The sequence spans 1358 residues: Tenascin-R (1358 aa).

The first 31 residues, 1-31 (MGIDGETVVLKNMLIGVNLILLGSMLKPSEC), serve as a signal peptide directing secretion. The disordered stretch occupies residues 37–58 (TERAQRQTVEEEGGASSYNTSS). Asparagine 55 carries N-linked (GlcNAc...) asparagine glycosylation. Positions 127–157 (CASSSQVLQELLSRIEMLEREVSLLRDQCNT) form a coiled coil. Serine 176 carries an O-linked (Xyl...) (chondroitin sulfate) serine glycan. Residues asparagine 180 and asparagine 198 are each glycosylated (N-linked (GlcNAc...) asparagine). 3 consecutive EGF-like domains span residues 188–199 (CICNEGWFGKNC), 219–230 (CICDSEYSGDDC), and 250–261 (CVCEEPYTGEDC). The O-linked (Xyl...) (chondroitin sulfate) serine glycan is linked to serine 271. Residue asparagine 278 is glycosylated (N-linked (GlcNAc...) asparagine). In terms of domain architecture, EGF-like 4 spans 281 to 292 (CLCQEGYAGEDC). Cystine bridges form between cysteine 297–cysteine 307 and cysteine 314–cysteine 323. Serine 302 carries an O-linked (Xyl...) (chondroitin sulfate) serine glycan. One can recognise an EGF-like 5 domain in the interval 312 to 323 (CICEEGYQGPDC). Fibronectin type-III domains are found at residues 328–420 (PPED…TPQG), 421–505 (LQFK…TVID), 506–597 (GPTQ…IDAP), 598–687 (KNLR…TELD), 688–777 (SPRD…FRPI), 778–865 (SHLH…TGID), 866–955 (PPKN…AMDS), 956–1042 (PMDL…TLLD), and 1043–1131 (PPDN…GGRV). Residues asparagine 392, asparagine 470, and asparagine 581 are each glycosylated (N-linked (GlcNAc...) asparagine). Serine 724 is subject to Phosphoserine. Residues asparagine 791, asparagine 869, asparagine 874, asparagine 1036, asparagine 1046, and asparagine 1261 are each glycosylated (N-linked (GlcNAc...) asparagine). In terms of domain architecture, Fibrinogen C-terminal spans 1129–1344 (GRVFSHPQDC…FVEMKMRPYI (216 aa)).

It belongs to the tenascin family. In terms of assembly, interacts with BCAN and ACAN in a calcium-dependent manner. Interacts with SCN2B, PTPRZ1, and CSPG3. Forms oligomers. Isoforms 1 and 2 form respectively trimeric (tribrachion) and dimeric kink-armed rodlike structures, which are linked by disulfide bridges. Interacts with CNTN1, TNC and FN1. Post-translationally, contains N-linked oligosaccharides with a sulfated carbohydrate structures. Contains N-linked oligosaccharides, O-linked sialylated structures and O-linked chondroitin sulfate glycosaminoglycans. As to expression, brain-specific.

The protein resides in the secreted. It localises to the extracellular space. It is found in the extracellular matrix. In terms of biological role, neural extracellular matrix (ECM) protein involved in interactions with different cells and matrix components. Theses interactions can influence cellular behavior by either evoking a stable adhesion and differentiation, or repulsion and inhibition of neurite growth. Binding to cell surface gangliosides inhibits RGD-dependent integrin-mediated cell adhesion and results in an inhibition of PTK2/FAK1 (FAK) phosphorylation and cell detachment. Binding to membrane surface sulfatides results in a oligodendrocyte adhesion and differentiation. Interaction with CNTN1 induces a repulsion of neurons and an inhibition of neurite outgrowth. Interacts with SCN2B may play a crucial role in clustering and regulation of activity of sodium channels at nodes of Ranvier. TNR-linked chondroitin sulfate glycosaminoglycans are involved in the interaction with FN1 and mediates inhibition of cell adhesion and neurite outgrowth. The highly regulated addition of sulfated carbohydrate structure may modulate the adhesive properties of TNR over the course of development and during synapse maintenance. The sequence is that of Tenascin-R (Tnr) from Mus musculus (Mouse).